We begin with the raw amino-acid sequence, 339 residues long: DNA-directed RNA polymerase subunit alpha (339 aa).

An alpha N-terminal domain (alpha-NTD) region spans residues 1 to 235 (MVREEVAVST…DLFIPFLHGE (235 aa)). Positions 267–339 (KAIALECIFI…FTIDLPKNKF (73 aa)) are alpha C-terminal domain (alpha-CTD).

The protein belongs to the RNA polymerase alpha chain family. In terms of assembly, in plastids the minimal PEP RNA polymerase catalytic core is composed of four subunits: alpha, beta, beta', and beta''. When a (nuclear-encoded) sigma factor is associated with the core the holoenzyme is formed, which can initiate transcription.

Its subcellular location is the plastid. It localises to the chloroplast. It catalyses the reaction RNA(n) + a ribonucleoside 5'-triphosphate = RNA(n+1) + diphosphate. Its function is as follows. DNA-dependent RNA polymerase catalyzes the transcription of DNA into RNA using the four ribonucleoside triphosphates as substrates. In Drimys granadensis, this protein is DNA-directed RNA polymerase subunit alpha.